The sequence spans 248 residues: Phosphatidylglycerol--prolipoprotein diacylglyceryl transferase (248 aa).

3 consecutive transmembrane segments (helical) span residues 6–26 (FSIFGIDIMWYGILITLGVIL), 48–68 (ILVWALPLAIVGARAYYVIFE), and 84–104 (GGGLAIYGGIIAAVITCYVIC). Arg130 serves as a coordination point for a 1,2-diacyl-sn-glycero-3-phospho-(1'-sn-glycerol). The next 2 helical transmembrane spans lie at 187–207 (GQITSMYMILYGILRFFVEGL) and 214–234 (IGALRVSQLVSIAIIIAGVIL).

This sequence belongs to the Lgt family.

It is found in the cell membrane. It catalyses the reaction L-cysteinyl-[prolipoprotein] + a 1,2-diacyl-sn-glycero-3-phospho-(1'-sn-glycerol) = an S-1,2-diacyl-sn-glyceryl-L-cysteinyl-[prolipoprotein] + sn-glycerol 1-phosphate + H(+). Its pathway is protein modification; lipoprotein biosynthesis (diacylglyceryl transfer). Functionally, catalyzes the transfer of the diacylglyceryl group from phosphatidylglycerol to the sulfhydryl group of the N-terminal cysteine of a prolipoprotein, the first step in the formation of mature lipoproteins. The sequence is that of Phosphatidylglycerol--prolipoprotein diacylglyceryl transferase from Finegoldia magna (strain ATCC 29328 / DSM 20472 / WAL 2508) (Peptostreptococcus magnus).